A 1011-amino-acid chain; its full sequence is MAETGDKPYRAEYAKSGRASCKKCGESIAKDSLRLALMVQSPMFDGKVPHWHHYSCFWKRARIVSHTDIDGFPELRWEDQEKIKKAIETGALQEEKGGTRKEVGKAEKSLTDFAAEYAKSNRSTCKGCEQKIEKGQIRISKKMVHPEKPQLGMIDNWYHPDCFVSRRAELGFLPAYGATQLLGFSILKAEDKETLKKQLPATKTEGKRKGEEVDGNVVAKKKSRKEKEKESKQEKQLKEQTELIWGIKDELRKVCSTNDLKELLIANKQEVPSGENAILDRVADGMAFGALLPCEECKGQFVFKSDAYYCSGDITAWTKCVAKTQTPNRKDWVIPKEFREIPYLKKFKCKKQDRIFPPEAATVNSAPPPPASAPLTETVTAPQDKPLTNMKILTLGKLSKNKEEVKNIVEELGGKMTTTANKATLCISTQKEVEKMSKKMEEVKDAKVRVVSEEFLKDVKSSNKGFQELLSLHAISPWGAEVKTEHQEVAVDGKCSKPANMKSAGKVKEEQGPSKSEKKMKLTVKGGAAVDPDSGLEDSAHVFEKGGKIFSATLGLVDIVKGTNSYYKLQLLEDDRESRYWVFRSWGRVGTVIGSNKLEQMPSKEDAVEHFLNLYEEKTGNSWHSKNFTKYPKKFYPLEIDYGQDEEAVRKLTVSAGTKSKLAKPIQDLIKMIFDVESMKKAMVEFEIDLQKMPLGKLSKRQIQSAYSILNEVQQAVSDGGSESQILDLSNRFYTLIPHDFGMKKPPLLSNLEYIQAKVQMLDNLLDIEVAYSLLRGGNEDGDKDPIDINYEKLRTDIKVVDKDSEEAKIIKQYVKNTHAATHNAYDLKVVEIFRIEREGESQRYKPFKQLHNRQLLWHGSRTTNFAGILSQGLRIAPPEAPVTGYMFGKGIYFADMVSKSANYCHTSQADPIGLILLGEVALGNMYELKNASHITKLPKGKHSVKGLGKTAPDPTATTTLDGVEVPLGNGISTGINDTCLLYNEYIVYDVAQVNLKYLLKLKFNYKTSLW.

2 PARP-type zinc fingers span residues 9–91 (YRAE…ETGA) and 113–203 (FAAE…PATK). C21, C24, H53, C56, C125, C128, H159, and C162 together coordinate Zn(2+). Residues 198–235 (QLPATKTEGKRKGEEVDGNVVAKKKSRKEKEKESKQEK) are disordered. Short sequence motifs (nuclear localization signal) lie at residues 207-209 (KRK) and 220-225 (KKKSRK). In terms of domain architecture, PADR1 zinc-binding spans 224–358 (RKEKEKESKQ…CKKQDRIFPP (135 aa)). Positions 225–235 (KEKEKESKQEK) are enriched in basic and acidic residues. The segment at 289 to 331 (GALLPCEECKGQFVFKSDAYYCSGDITAWTKCVAKTQTPNRKD) is zinc ribbon. C294, C297, C310, and C320 together coordinate Zn(2+). The segment at 359–378 (EAATVNSAPPPPASAPLTET) is disordered. Residues 371-522 (ASAPLTETVT…PSKSEKKMKL (152 aa)) are automodification domain. The 92-residue stretch at 382–473 (PQDKPLTNMK…KGFQELLSLH (92 aa)) folds into the BRCT domain. E403, E404, E410, E411, E432, E434, E441, E442, E453, E454, E468, E481, E485, E488, E509, E510, and E517 each carry polyADP-ribosyl glutamic acid. A disordered region spans residues 496 to 519 (SKPANMKSAGKVKEEQGPSKSEKK). Positions 506–519 (KVKEEQGPSKSEKK) are enriched in basic and acidic residues. The WGR domain occupies 539-635 (SAHVFEKGGK…KNFTKYPKKF (97 aa)). The PARP alpha-helical domain maps to 659 to 776 (KSKLAKPIQD…DIEVAYSLLR (118 aa)). Residues 785 to 1011 (DPIDINYEKL…LKFNYKTSLW (227 aa)) enclose the PARP catalytic domain. NAD(+) is bound by residues 859-861 (HGS), G868, R875, and S901. The For poly [ADP-ribose] polymerase activity role is filled by E985.

This sequence belongs to the ARTD/PARP family. In terms of assembly, homodimer; PARP-type zinc-fingers from separate parp1 molecules form a dimer module that specifically recognizes DNA strand breaks. Post-translationally, poly-ADP-ribosylated on serine, glutamate and aspartate residues by autocatalysis. Auto-ADP-ribosylation on serine takes place following interaction with HPF1. Auto poly-ADP-ribosylation on serine residues promotes its dissociation from chromatin.

Its subcellular location is the chromosome. It is found in the nucleus. It localises to the nucleolus. The protein localises to the cytoplasm. The protein resides in the cytosol. The enzyme catalyses NAD(+) + (ADP-D-ribosyl)n-acceptor = nicotinamide + (ADP-D-ribosyl)n+1-acceptor + H(+).. It catalyses the reaction L-seryl-[protein] + NAD(+) = O-(ADP-D-ribosyl)-L-seryl-[protein] + nicotinamide + H(+). The catalysed reaction is L-aspartyl-[protein] + NAD(+) = 4-O-(ADP-D-ribosyl)-L-aspartyl-[protein] + nicotinamide. It carries out the reaction L-glutamyl-[protein] + NAD(+) = 5-O-(ADP-D-ribosyl)-L-glutamyl-[protein] + nicotinamide. The enzyme catalyses L-tyrosyl-[protein] + NAD(+) = O-(ADP-D-ribosyl)-L-tyrosyl-[protein] + nicotinamide + H(+). It catalyses the reaction L-histidyl-[protein] + NAD(+) = N(tele)-(ADP-D-ribosyl)-L-histidyl-[protein] + nicotinamide + H(+). With respect to regulation, ADP-ribosyltransferase activity is regulated via an allosteric activation mechanism. In absence of activation signal, parp1 is autoinhibited by the PARP alpha-helical domain (also named HD region), which prevents effective NAD(+)-binding. Activity is highly stimulated by signals, such as DNA strand breaks. Binding to damaged DNA unfolds the PARP alpha-helical domain, relieving autoinhibition. Poly-ADP-ribosyltransferase activity is tightly regulated and parp1 is removed from damaged chromatin following initial poly-ADP-ribosylation of chromatin to avoid prolonged residence (trapping) that has cytotoxic consequences. A number of factors or post-translational modifications (auto-poly-ADP-ribosylation) promote parp1 removal from chromatin. Functionally, poly-ADP-ribosyltransferase that mediates poly-ADP-ribosylation of proteins and plays a key role in DNA repair. Mediates glutamate, aspartate, serine, histidine or tyrosine ADP-ribosylation of proteins: the ADP-D-ribosyl group of NAD(+) is transferred to the acceptor carboxyl group of target residues and further ADP-ribosyl groups are transferred to the 2'-position of the terminal adenosine moiety, building up a polymer with an average chain length of 20-30 units. Serine ADP-ribosylation of proteins constitutes the primary form of ADP-ribosylation of proteins in response to DNA damage. Specificity for the different amino acids is conferred by interacting factors, such as hpf1 and nmnat1. Following interaction with hpf1, catalyzes serine ADP-ribosylation of target proteins; hpf1 confers serine specificity by completing the parp1 active site. Also catalyzes tyrosine ADP-ribosylation of target proteins following interaction with hpf1. Following interaction with nmnat1, catalyzes glutamate and aspartate ADP-ribosylation of target proteins; nmnat1 confers glutamate and aspartate specificity. Parp1 initiates the repair of DNA breaks: recognizes and binds DNA breaks within chromatin and recruits hpf1, licensing serine ADP-ribosylation of target proteins, such as histones (H2BS6ADPr and H3S10ADPr), thereby promoting decompaction of chromatin and the recruitment of repair factors leading to the reparation of DNA strand breaks. In addition to base excision repair (BER) pathway, also involved in double-strand breaks (DSBs) repair. Mediates the poly-ADP-ribosylation of a number of proteins. In addition to proteins, also able to ADP-ribosylate DNA: catalyzes ADP-ribosylation of DNA strand break termini containing terminal phosphates and a 2'-OH group in single- and double-stranded DNA, respectively. Parp1-mediated DNA repair in neurons plays a role in sleep: senses DNA damage in neurons and promotes sleep, facilitating efficient DNA repair. In addition to DNA repair, also involved in other processes, such as transcription regulation, programmed cell death, membrane repair, adipogenesis and innate immunity. Acts as a repressor of transcription: binds to nucleosomes and modulates chromatin structure in a manner similar to histone H1, thereby altering RNA polymerase II. Acts both as a positive and negative regulator of transcription elongation, depending on the context. Poly-ADP-ribose chains generated by parp1 also play a role in poly-ADP-ribose-dependent cell death, a process named parthanatos. Also acts as a negative regulator of the cGAS-STING pathway by mediating poly-ADP-ribosylation and inactivation of cgas. Acts as a negative regulator of adipogenesis by catalyzing poly ADP-ribosylation of histone H2B on 'Glu-35' (H2BE35ADPr). This Gallus gallus (Chicken) protein is Poly [ADP-ribose] polymerase 1 (PARP1).